Here is a 154-residue protein sequence, read N- to C-terminus: 6,7-dimethyl-8-ribityllumazine synthase (154 aa).

Residues F15, 47–49 (TFD), and 71–73 (AVI) each bind 5-amino-6-(D-ribitylamino)uracil. 76–77 (ET) lines the (2S)-2-hydroxy-3-oxobutyl phosphate pocket. The Proton donor role is filled by H79. L104 is a 5-amino-6-(D-ribitylamino)uracil binding site. Position 119 (R119) interacts with (2S)-2-hydroxy-3-oxobutyl phosphate.

This sequence belongs to the DMRL synthase family.

The enzyme catalyses (2S)-2-hydroxy-3-oxobutyl phosphate + 5-amino-6-(D-ribitylamino)uracil = 6,7-dimethyl-8-(1-D-ribityl)lumazine + phosphate + 2 H2O + H(+). The protein operates within cofactor biosynthesis; riboflavin biosynthesis; riboflavin from 2-hydroxy-3-oxobutyl phosphate and 5-amino-6-(D-ribitylamino)uracil: step 1/2. Catalyzes the formation of 6,7-dimethyl-8-ribityllumazine by condensation of 5-amino-6-(D-ribitylamino)uracil with 3,4-dihydroxy-2-butanone 4-phosphate. This is the penultimate step in the biosynthesis of riboflavin. In Saccharolobus islandicus (strain L.S.2.15 / Lassen #1) (Sulfolobus islandicus), this protein is 6,7-dimethyl-8-ribityllumazine synthase.